The chain runs to 167 residues: NADH-ubiquinone oxidoreductase chain 6 (167 aa).

Transmembrane regions (helical) follow at residues 24 to 44 (PYFG…IILA), 54 to 74 (LLLI…ALVL), 85 to 105 (VLMK…GGYL), and 135 to 155 (WLLI…ILEI).

It belongs to the complex I subunit 6 family.

It localises to the mitochondrion membrane. It carries out the reaction a ubiquinone + NADH + 5 H(+)(in) = a ubiquinol + NAD(+) + 4 H(+)(out). In terms of biological role, core subunit of the mitochondrial membrane respiratory chain NADH dehydrogenase (Complex I) that is believed to belong to the minimal assembly required for catalysis. Complex I functions in the transfer of electrons from NADH to the respiratory chain. The immediate electron acceptor for the enzyme is believed to be ubiquinone. In Myxine glutinosa (Atlantic hagfish), this protein is NADH-ubiquinone oxidoreductase chain 6 (MT-ND6).